A 217-amino-acid chain; its full sequence is Serine acetyltransferase (217 aa).

This sequence belongs to the transferase hexapeptide repeat family.

It localises to the cytoplasm. It carries out the reaction L-serine + acetyl-CoA = O-acetyl-L-serine + CoA. It functions in the pathway amino-acid biosynthesis; L-cysteine biosynthesis; L-cysteine from L-serine: step 1/2. With respect to regulation, inhibited by cysteine. Its function is as follows. Catalyzes the acetylation of serine by acetyl-CoA to produce O-acetylserine (OAS). This Bacillus subtilis (strain 168) protein is Serine acetyltransferase (cysE).